Consider the following 306-residue polypeptide: UDP-N-acetylenolpyruvoylglucosamine reductase (306 aa).

The region spanning 29 to 193 (RVGGPADWLF…IRASLRGTPD (165 aa)) is the FAD-binding PCMH-type domain. The active site involves Arg-173. Catalysis depends on Ser-222, which acts as the Proton donor. The active site involves Glu-292.

This sequence belongs to the MurB family. Requires FAD as cofactor.

The protein resides in the cytoplasm. The enzyme catalyses UDP-N-acetyl-alpha-D-muramate + NADP(+) = UDP-N-acetyl-3-O-(1-carboxyvinyl)-alpha-D-glucosamine + NADPH + H(+). Its pathway is cell wall biogenesis; peptidoglycan biosynthesis. In terms of biological role, cell wall formation. The sequence is that of UDP-N-acetylenolpyruvoylglucosamine reductase from Gluconobacter oxydans (strain 621H) (Gluconobacter suboxydans).